The primary structure comprises 190 residues: Probable nicotinate-nucleotide adenylyltransferase (190 aa).

It belongs to the NadD family.

It catalyses the reaction nicotinate beta-D-ribonucleotide + ATP + H(+) = deamido-NAD(+) + diphosphate. It participates in cofactor biosynthesis; NAD(+) biosynthesis; deamido-NAD(+) from nicotinate D-ribonucleotide: step 1/1. Its function is as follows. Catalyzes the reversible adenylation of nicotinate mononucleotide (NaMN) to nicotinic acid adenine dinucleotide (NaAD). The sequence is that of Probable nicotinate-nucleotide adenylyltransferase from Frankia casuarinae (strain DSM 45818 / CECT 9043 / HFP020203 / CcI3).